The sequence spans 96 residues: Co-chaperonin GroES 2 (96 aa).

It belongs to the GroES chaperonin family. As to quaternary structure, heptamer of 7 subunits arranged in a ring. Interacts with the chaperonin GroEL.

Its subcellular location is the cytoplasm. Together with the chaperonin GroEL, plays an essential role in assisting protein folding. The GroEL-GroES system forms a nano-cage that allows encapsulation of the non-native substrate proteins and provides a physical environment optimized to promote and accelerate protein folding. GroES binds to the apical surface of the GroEL ring, thereby capping the opening of the GroEL channel. In Vibrio cholerae serotype O1 (strain ATCC 39315 / El Tor Inaba N16961), this protein is Co-chaperonin GroES 2.